Here is a 358-residue protein sequence, read N- to C-terminus: Glyoxylate/succinic semialdehyde reductase 2, chloroplastic (358 aa).

The transit peptide at 1–44 directs the protein to the chloroplast; sequence MPLVSLSFASSSSKAMALCSICPRIPLRFRPKPISPFLSKPQIC. Residues 70 to 84 and Thr161 each bind NADP(+); that span reads GFLG…MAQN. Residue Lys236 is part of the active site. An NADP(+)-binding site is contributed by Lys304.

The protein belongs to the HIBADH-related family. NP60 subfamily.

The protein resides in the plastid. Its subcellular location is the chloroplast stroma. The enzyme catalyses glycolate + NADP(+) = glyoxylate + NADPH + H(+). It carries out the reaction 4-hydroxybutanoate + NADP(+) = succinate semialdehyde + NADPH + H(+). Its activity is regulated as follows. The ratio of NADPH/NADP(+) may regulate enzymatic activity. Its function is as follows. Catalyzes the NADPH-dependent reduction of glyoxylate to glycolate as well as succinic semialdehyde (SSA) to gamma-hydroxybutyrate in vitro. May function in redox homeostasis and play a role in oxidative stress tolerance by detoxifying glyoxylate and SSA generated in glycolate metabolism and GABA metabolism, respectively. The protein is Glyoxylate/succinic semialdehyde reductase 2, chloroplastic (GLYR2) of Arabidopsis thaliana (Mouse-ear cress).